The chain runs to 389 residues: MQTTEPMTPPAPLASAQTVIDLGAIDHNVRVLRELAGSADVMAVVKADAYGHGALPVARTALAAGAAALGVATIPEALALREGGITAPVLAWLHPPGTDFAPAIAADVEVAVSSRRQLEQVTAAAAEVGRTATVTVKVDTGLSRNGVGAADYPEVLDVLRRAQADGAIRVRGLMSHLVHGDDPENPFNGLQGQRLADMRVYAREHGVDYEVAHLCNSPAAMTRPDLAFEMVRPGISLYGLSPIPERGDMGLRPAMTLKCPVALVRSVHAGDGVSYGHRWVADRDTTLGLLPIGYADGVYRALSGRIDVLIKGRRRRAVGRICMDQFVVDLGPDADDVAVGDDAILFGPGANGEPTAQDWAELLDTIHYEVVTSPRGRVTRTYLPAGQQD.

K46 serves as the catalytic Proton acceptor; specific for D-alanine. At K46 the chain carries N6-(pyridoxal phosphate)lysine. Residue R144 coordinates substrate. Residue Y275 is the Proton acceptor; specific for L-alanine of the active site. M323 is a binding site for substrate.

This sequence belongs to the alanine racemase family. It depends on pyridoxal 5'-phosphate as a cofactor.

It carries out the reaction L-alanine = D-alanine. The protein operates within amino-acid biosynthesis; D-alanine biosynthesis; D-alanine from L-alanine: step 1/1. Functionally, catalyzes the interconversion of L-alanine and D-alanine. May also act on other amino acids. In Mycolicibacterium smegmatis (strain ATCC 700084 / mc(2)155) (Mycobacterium smegmatis), this protein is Alanine racemase (alr).